Reading from the N-terminus, the 341-residue chain is Methionine import ATP-binding protein MetN 1 (341 aa).

One can recognise an ABC transporter domain in the interval 2–241; sequence IEFRQVSKTF…PKTTIAQNFV (240 aa). 38-45 contributes to the ATP binding site; sequence GYSGAGKS.

This sequence belongs to the ABC transporter superfamily. Methionine importer (TC 3.A.1.24) family. The complex is composed of two ATP-binding proteins (MetN), two transmembrane proteins (MetI) and a solute-binding protein (MetQ).

It is found in the cell membrane. The enzyme catalyses L-methionine(out) + ATP + H2O = L-methionine(in) + ADP + phosphate + H(+). It carries out the reaction D-methionine(out) + ATP + H2O = D-methionine(in) + ADP + phosphate + H(+). Part of the ABC transporter complex MetNIQ involved in methionine import. Responsible for energy coupling to the transport system. In Staphylococcus aureus (strain MW2), this protein is Methionine import ATP-binding protein MetN 1.